The primary structure comprises 281 residues: Pantothenate synthetase (281 aa).

30–37 (MGYLHEGH) lines the ATP pocket. Catalysis depends on H37, which acts as the Proton donor. Residue Q61 coordinates (R)-pantoate. Q61 is a beta-alanine binding site. 147–150 (GQKD) is an ATP binding site. Q153 contacts (R)-pantoate. ATP is bound by residues V176 and 184–187 (MSSR).

This sequence belongs to the pantothenate synthetase family. As to quaternary structure, homodimer.

The protein resides in the cytoplasm. It catalyses the reaction (R)-pantoate + beta-alanine + ATP = (R)-pantothenate + AMP + diphosphate + H(+). It participates in cofactor biosynthesis; (R)-pantothenate biosynthesis; (R)-pantothenate from (R)-pantoate and beta-alanine: step 1/1. Catalyzes the condensation of pantoate with beta-alanine in an ATP-dependent reaction via a pantoyl-adenylate intermediate. The polypeptide is Pantothenate synthetase (Caldicellulosiruptor saccharolyticus (strain ATCC 43494 / DSM 8903 / Tp8T 6331)).